We begin with the raw amino-acid sequence, 227 residues long: ATP-dependent dethiobiotin synthetase BioD (227 aa).

An ATP-binding site is contributed by 13–18 (DIGKTY). Threonine 17 serves as a coordination point for Mg(2+). The active site involves lysine 38. Serine 42 serves as a coordination point for substrate. Residues aspartate 55, 116–119 (EGSG), and 179–180 (NN) each bind ATP. Mg(2+) is bound by residues aspartate 55 and glutamate 116.

The protein belongs to the dethiobiotin synthetase family. In terms of assembly, homodimer. Mg(2+) is required as a cofactor.

The protein localises to the cytoplasm. It carries out the reaction (7R,8S)-7,8-diammoniononanoate + CO2 + ATP = (4R,5S)-dethiobiotin + ADP + phosphate + 3 H(+). Its pathway is cofactor biosynthesis; biotin biosynthesis; biotin from 7,8-diaminononanoate: step 1/2. Functionally, catalyzes a mechanistically unusual reaction, the ATP-dependent insertion of CO2 between the N7 and N8 nitrogen atoms of 7,8-diaminopelargonic acid (DAPA, also called 7,8-diammoniononanoate) to form a ureido ring. The polypeptide is ATP-dependent dethiobiotin synthetase BioD (Clostridium botulinum (strain 657 / Type Ba4)).